We begin with the raw amino-acid sequence, 376 residues long: Cobalt-precorrin-5B C(1)-methyltransferase (376 aa).

Belongs to the CbiD family.

The catalysed reaction is Co-precorrin-5B + S-adenosyl-L-methionine = Co-precorrin-6A + S-adenosyl-L-homocysteine. Its pathway is cofactor biosynthesis; adenosylcobalamin biosynthesis; cob(II)yrinate a,c-diamide from sirohydrochlorin (anaerobic route): step 6/10. Catalyzes the methylation of C-1 in cobalt-precorrin-5B to form cobalt-precorrin-6A. In Bradyrhizobium sp. (strain BTAi1 / ATCC BAA-1182), this protein is Cobalt-precorrin-5B C(1)-methyltransferase.